We begin with the raw amino-acid sequence, 505 residues long: Adenylosuccinate synthetase, chloroplastic (505 aa).

A chloroplast-targeting transit peptide spans 1 to 60 (MTTMNISTLRLDSNPITTSTKSTTHRSGALGYNGSYSCRLLQFQKKNKAPSIIVCSTKPL). GTP-binding positions include 92–98 (GDEGKGK) and 120–122 (GHT). Aspartate 93 acts as the Proton acceptor in catalysis. Mg(2+) is bound by residues aspartate 93 and glycine 120. Residues 93 to 96 (DEGK), 118 to 121 (NAGH), threonine 210, arginine 224, glutamine 304, threonine 319, and arginine 383 contribute to the IMP site. Histidine 121 acts as the Proton donor in catalysis. 379–385 (TTTGRPR) is a substrate binding site. Residues arginine 385, 411-413 (KLD), and 494-496 (GVG) each bind GTP.

It belongs to the adenylosuccinate synthetase family. Homodimer. Mg(2+) serves as cofactor.

The protein localises to the plastid. It is found in the chloroplast. The enzyme catalyses IMP + L-aspartate + GTP = N(6)-(1,2-dicarboxyethyl)-AMP + GDP + phosphate + 2 H(+). It participates in purine metabolism; AMP biosynthesis via de novo pathway; AMP from IMP: step 1/2. Its function is as follows. Plays an important role in the de novo pathway and in the salvage pathway of purine nucleotide biosynthesis. Catalyzes the first committed step in the biosynthesis of AMP from IMP. In Nicotiana tabacum (Common tobacco), this protein is Adenylosuccinate synthetase, chloroplastic.